Consider the following 308-residue polypeptide: Putative S-adenosyl-L-methionine-dependent methyltransferase MAB_4584c (308 aa).

Residues D131 and 160–161 (DL) contribute to the S-adenosyl-L-methionine site.

It belongs to the UPF0677 family.

In terms of biological role, exhibits S-adenosyl-L-methionine-dependent methyltransferase activity. This Mycobacteroides abscessus (strain ATCC 19977 / DSM 44196 / CCUG 20993 / CIP 104536 / JCM 13569 / NCTC 13031 / TMC 1543 / L948) (Mycobacterium abscessus) protein is Putative S-adenosyl-L-methionine-dependent methyltransferase MAB_4584c.